Here is a 255-residue protein sequence, read N- to C-terminus: 4-diphosphocytidyl-2-C-methyl-D-erythritol kinase (255 aa).

The active site involves Lys6. 95-105 serves as a coordination point for ATP; sequence PVCAGLGGGSS. The active site involves Asp137.

The protein belongs to the GHMP kinase family. IspE subfamily.

The enzyme catalyses 4-CDP-2-C-methyl-D-erythritol + ATP = 4-CDP-2-C-methyl-D-erythritol 2-phosphate + ADP + H(+). It functions in the pathway isoprenoid biosynthesis; isopentenyl diphosphate biosynthesis via DXP pathway; isopentenyl diphosphate from 1-deoxy-D-xylulose 5-phosphate: step 3/6. Catalyzes the phosphorylation of the position 2 hydroxy group of 4-diphosphocytidyl-2C-methyl-D-erythritol. The protein is 4-diphosphocytidyl-2-C-methyl-D-erythritol kinase of Campylobacter jejuni subsp. jejuni serotype O:23/36 (strain 81-176).